Reading from the N-terminus, the 88-residue chain is Large ribosomal subunit protein bL31B (88 aa).

The protein belongs to the bacterial ribosomal protein bL31 family. Type B subfamily. Part of the 50S ribosomal subunit.

This chain is Large ribosomal subunit protein bL31B, found in Paraburkholderia phytofirmans (strain DSM 17436 / LMG 22146 / PsJN) (Burkholderia phytofirmans).